Reading from the N-terminus, the 398-residue chain is Homocysteine-responsive endoplasmic reticulum-resident ubiquitin-like domain member 2 protein (398 aa).

Residues 11-90 (VTLVIKAPNQ…HMVHLVCASR (80 aa)) form the Ubiquitin-like domain. Disordered regions lie at residues 90–143 (RTPP…SIRH) and 212–247 (NQSTSNGENAQPVPRPVTNSENPPPNPPRAPPNVAP). Residues 96 to 125 (PKASKSSKSMGTSSSGRSSSSGSANPGSTS) are compositionally biased toward low complexity. The span at 233–245 (NPPPNPPRAPPNV) shows a compositional bias: pro residues. A helical transmembrane segment spans residues 298–318 (FVMVMGALILVYMHQAGWFPL).

It localises to the membrane. In terms of biological role, could be involved in the unfolded protein response (UPR) pathway. The protein is Homocysteine-responsive endoplasmic reticulum-resident ubiquitin-like domain member 2 protein (herpud2) of Xenopus laevis (African clawed frog).